A 444-amino-acid polypeptide reads, in one-letter code: Methylenetetrahydrofolate--tRNA-(uracil-5-)-methyltransferase TrmFO (444 aa).

10–15 (GAGLAG) contributes to the FAD binding site.

This sequence belongs to the MnmG family. TrmFO subfamily. It depends on FAD as a cofactor.

It is found in the cytoplasm. The catalysed reaction is uridine(54) in tRNA + (6R)-5,10-methylene-5,6,7,8-tetrahydrofolate + NADH + H(+) = 5-methyluridine(54) in tRNA + (6S)-5,6,7,8-tetrahydrofolate + NAD(+). It catalyses the reaction uridine(54) in tRNA + (6R)-5,10-methylene-5,6,7,8-tetrahydrofolate + NADPH + H(+) = 5-methyluridine(54) in tRNA + (6S)-5,6,7,8-tetrahydrofolate + NADP(+). In terms of biological role, catalyzes the folate-dependent formation of 5-methyl-uridine at position 54 (M-5-U54) in all tRNAs. This chain is Methylenetetrahydrofolate--tRNA-(uracil-5-)-methyltransferase TrmFO, found in Streptococcus equi subsp. zooepidemicus (strain H70).